The primary structure comprises 600 residues: MGDISKHNIFSLPEDILAKLELREEYSVEEKTDSANLSNQGDIVDSTQKNISSCVNCQIDNLHTLDERKSHIKSDWHRFNTKRKITKLPPVSQDEFESIIEDLPESLSGSESETNSESEEDNFQIEKAFKQSLNIGKVDSADENNNQRTNSPLTWFQLSNASAEVPTYIGVYKHMFSGNNHITKDLLVQQQNHNRQKPLQLAMFMVGGGHFAAMIASNEFNPRDPHVPKVLAQKTIHRYTTRRKQGGSQGAADNTKGNIHSAGSGLRRYNEQALIKDIQQVFKDWGKLLETCDLIFVRAIGSSNRSIFFSQPGALISPKDPKLRVFPFTTKRATHSELLRCYKELVTPKISHVDSISIKAQEEERKRQAEIEKEIRQSRLQEEERKKKKLAKYTEVIISNLKASNIEAFLEYLRSNDLSINFQFYPKNVHLHTSTPLHYAVTQKNAKLVAKLLRNGADPAMLNGNGKTPFEISTGNKEVKDEFLIARHELGESFFDWEAAKVGAPQSREQIQKQRQKAKTKLENQRRDKERQEELRRKEAMQKIEEQSKRDYDKLHGEGHSLGINNVRKVDELQSLSPEMRMRIEREKRAAAAMKRMQTK.

At Ser-38 the chain carries Phosphoserine. The region spanning 197 to 348 (KPLQLAMFMV…LRCYKELVTP (152 aa)) is the VLRF1 domain. A disordered region spans residues 239-263 (YTTRRKQGGSQGAADNTKGNIHSAG). Gln-249 is an active-site residue. A coiled-coil region spans residues 359–392 (KAQEEERKRQAEIEKEIRQSRLQEEERKKKKLAK). ANK repeat units lie at residues 432–461 (HTST…DPAM) and 465–492 (NGKT…ELGE). Residues 506 to 550 (QSREQIQKQRQKAKTKLENQRRDKERQEELRRKEAMQKIEEQSKR) are a coiled coil. The segment at 517-563 (KAKTKLENQRRDKERQEELRRKEAMQKIEEQSKRDYDKLHGEGHSLG) is disordered. The span at 520-559 (TKLENQRRDKERQEELRRKEAMQKIEEQSKRDYDKLHGEG) shows a compositional bias: basic and acidic residues.

It belongs to the ANKZF1/VMS1 family.

It is found in the cytoplasm. Its subcellular location is the mitochondrion. It localises to the endoplasmic reticulum membrane. Its function is as follows. Endonuclease that cleaves polypeptidyl-tRNAs downstream of the ribosome-associated quality control (RQC) pathway to release incompletely synthesized polypeptides for degradation. The RQC pathway disassembles aberrantly stalled translation complexes to recycle or degrade the constituent parts. Vms1 acts downstream disassembly of stalled ribosomes and specifically cleaves off the terminal 3'-CCA nucleotides universal to all tRNAs from polypeptidyl-tRNAs, releasing (1) ubiquitinated polypeptides from 60S ribosomal subunit for degradation by the ERAD pathway and (2) cleaved tRNAs for recycling. Component of an evolutionarily conserved system for ubiquitin-mediated mitochondria-associated protein degradation (MAD), which is necessary to maintain mitochondrial, cellular, and organismal viability. The chain is tRNA endonuclease vms1 (vms1) from Schizosaccharomyces pombe (strain 972 / ATCC 24843) (Fission yeast).